We begin with the raw amino-acid sequence, 1083 residues long: Error-prone DNA polymerase (1083 aa).

The protein belongs to the DNA polymerase type-C family. DnaE2 subfamily.

Its subcellular location is the cytoplasm. The catalysed reaction is DNA(n) + a 2'-deoxyribonucleoside 5'-triphosphate = DNA(n+1) + diphosphate. In terms of biological role, DNA polymerase involved in damage-induced mutagenesis and translesion synthesis (TLS). It is not the major replicative DNA polymerase. This chain is Error-prone DNA polymerase, found in Xanthomonas axonopodis pv. citri (strain 306).